Here is a 401-residue protein sequence, read N- to C-terminus: Nicotinate phosphoribosyltransferase (401 aa).

H224 is subject to Phosphohistidine; by autocatalysis.

This sequence belongs to the NAPRTase family. In terms of processing, transiently phosphorylated on a His residue during the reaction cycle. Phosphorylation strongly increases the affinity for substrates and increases the rate of nicotinate D-ribonucleotide production. Dephosphorylation regenerates the low-affinity form of the enzyme, leading to product release.

It carries out the reaction nicotinate + 5-phospho-alpha-D-ribose 1-diphosphate + ATP + H2O = nicotinate beta-D-ribonucleotide + ADP + phosphate + diphosphate. The protein operates within cofactor biosynthesis; NAD(+) biosynthesis; nicotinate D-ribonucleotide from nicotinate: step 1/1. In terms of biological role, catalyzes the synthesis of beta-nicotinate D-ribonucleotide from nicotinate and 5-phospho-D-ribose 1-phosphate at the expense of ATP. In Pseudomonas putida (strain ATCC 700007 / DSM 6899 / JCM 31910 / BCRC 17059 / LMG 24140 / F1), this protein is Nicotinate phosphoribosyltransferase.